We begin with the raw amino-acid sequence, 380 residues long: 3-isopropylmalate dehydratase large subunit 2 (380 aa).

Residues Cys-262, Cys-320, and Cys-323 each contribute to the [4Fe-4S] cluster site.

This sequence belongs to the aconitase/IPM isomerase family. LeuC type 2 subfamily. Heterodimer of LeuC and LeuD. [4Fe-4S] cluster is required as a cofactor.

The catalysed reaction is (2R,3S)-3-isopropylmalate = (2S)-2-isopropylmalate. It functions in the pathway amino-acid biosynthesis; L-leucine biosynthesis; L-leucine from 3-methyl-2-oxobutanoate: step 2/4. Its function is as follows. Catalyzes the isomerization between 2-isopropylmalate and 3-isopropylmalate, via the formation of 2-isopropylmaleate. In Pyrococcus furiosus (strain ATCC 43587 / DSM 3638 / JCM 8422 / Vc1), this protein is 3-isopropylmalate dehydratase large subunit 2.